Reading from the N-terminus, the 344-residue chain is Ribosomal RNA large subunit methyltransferase Cfr (344 aa).

Glu-90 acts as the Proton acceptor in catalysis. Positions 97 to 330 constitute a Radical SAM core domain; that stretch reads KQGWESFCIS…ATVRTQFGSE (234 aa). Cys-104 and Cys-335 are oxidised to a cystine. The [4Fe-4S] cluster site is built by Cys-111, Cys-115, and Cys-118. S-adenosyl-L-methionine contacts are provided by residues 157–158, Ser-188, 211–213, and Asn-292; these read GE and SLH. Cys-335 serves as the catalytic S-methylcysteine intermediate.

This sequence belongs to the radical SAM superfamily. RlmN family. Cfr subfamily. Requires [4Fe-4S] cluster as cofactor.

The protein localises to the cytoplasm. It catalyses the reaction adenosine(2503) in 23S rRNA + 2 reduced [2Fe-2S]-[ferredoxin] + 2 S-adenosyl-L-methionine = 8-methyladenosine(2503) in 23S rRNA + 5'-deoxyadenosine + L-methionine + 2 oxidized [2Fe-2S]-[ferredoxin] + S-adenosyl-L-homocysteine. Functionally, specifically methylates position 8 of adenine 2503 in 23S rRNA. Confers resistance to some classes of antibiotics. This chain is Ribosomal RNA large subunit methyltransferase Cfr, found in Clostridium botulinum (strain Loch Maree / Type A3).